The primary structure comprises 411 residues: Aspartate kinase (411 aa).

One can recognise an ACT domain in the interval 265 to 348; the sequence is LTIRGVPDTP…KIAKVSIVGV (84 aa).

It belongs to the aspartokinase family.

It is found in the cytoplasm. The enzyme catalyses L-aspartate + ATP = 4-phospho-L-aspartate + ADP. It participates in amino-acid biosynthesis; L-lysine biosynthesis via DAP pathway; (S)-tetrahydrodipicolinate from L-aspartate: step 1/4. It functions in the pathway amino-acid biosynthesis; L-methionine biosynthesis via de novo pathway; L-homoserine from L-aspartate: step 1/3. Its pathway is amino-acid biosynthesis; L-threonine biosynthesis; L-threonine from L-aspartate: step 1/5. With respect to regulation, allosterically feedback inhibited by L-lysine and L-threonine individually and also subject to a concerted feedback inhibition by these amino acids. Involved in the biosynthesis of L-aspartate-beta-semialdehyde which is a central intermediate in the biosynthesis of different amino acids (L-lysine, L-methionine, L-threonine). Catalyzes the phosphorylation of the beta-carboxyl group of L-aspartate to yield 4-phospho-L-aspartate. This is Aspartate kinase from Pseudomonas putida (strain ATCC 47054 / DSM 6125 / CFBP 8728 / NCIMB 11950 / KT2440).